Reading from the N-terminus, the 387-residue chain is ATP phosphoribosyltransferase regulatory subunit (387 aa).

The protein belongs to the class-II aminoacyl-tRNA synthetase family. HisZ subfamily. In terms of assembly, heteromultimer composed of HisG and HisZ subunits.

The protein localises to the cytoplasm. It functions in the pathway amino-acid biosynthesis; L-histidine biosynthesis; L-histidine from 5-phospho-alpha-D-ribose 1-diphosphate: step 1/9. In terms of biological role, required for the first step of histidine biosynthesis. May allow the feedback regulation of ATP phosphoribosyltransferase activity by histidine. The polypeptide is ATP phosphoribosyltransferase regulatory subunit (Ralstonia pickettii (strain 12J)).